The following is a 336-amino-acid chain: PDGSGRSSNRRDRPRQLSPSQSSDSQVHSGVQVEGRRGHSSSANRRAGSSSGSGVQGASAGGLAADASRRSGARQGQASAQGRAGSQGQAQGRVSSSADRQGRRGVSESRASDSEGHSDFSEGQAVGAHRQSGAGQRHEQRSSRGQHGSGYYYEQEHSEEESDSQHQHGHQHEQQRGHQHQHQHQHEHEQPESGHRQQQSSGRGHQGAHQEQGRDSARPRGSNQGHSSSRHQADSPRVSARSGSGGRGQSPDASGRSSNRRDRPRQPSPSQSSDSQVHSGVQVEAQRGQSSSANRRAGSSSGSGVQGAAASGQGGYESIFTAKHLDFNQSHSYYYY.

Positions 1–313 (PDGSGRSSNR…GVQGAAASGQ (313 aa)) are disordered. Composition is skewed to low complexity over residues 16 to 26 (QLSPSQSSDSQ), 40 to 66 (SSSA…LAAD), and 73 to 98 (ARQG…SSSA). Composition is skewed to basic and acidic residues over residues 100 to 120 (RQGR…HSDF), 163 to 176 (DSQH…EQQR), and 184 to 195 (HQHEHEQPESGH). The segment covering 285 to 311 (AQRGQSSSANRRAGSSSGSGVQGAAAS) has biased composition (low complexity).

Belongs to the S100-fused protein family. Post-translationally, filaggrin is initially synthesized as a large, insoluble, highly phosphorylated precursor containing many tandem copies of 248 AA, which are not separated by large linker sequences. During terminal differentiation it is dephosphorylated and proteolytically cleaved. Expressed in the granular layer of the epidermis (at protein level). Expressed in the epidermis of the ear (at protein level).

Its subcellular location is the cytoplasmic granule. In terms of biological role, aggregates keratin intermediate filaments and promotes disulfide-bond formation among the intermediate filaments during terminal differentiation of mammalian epidermis. The sequence is that of Filaggrin (Flg) from Mus musculus (Mouse).